The primary structure comprises 452 residues: MPREIITLQCGQCGNQIGVEFWKQLCNEHNIDQEGILKNNNFLNEDRKDIFFYQADDEHFIPGALLFDLEPRVINSIQTSEYRNLYNPENMFISKEGGGAGNNWGCGYSQGHKVEEEIIDMIDREVDNSDNLEGFILSHSIAGGTGSGMGSYLLELLNDNYSKKMIQTFSVFPLLTNESSDVVVQPYNSILTLKRLILSTDSVVVIDNTSLNRIFVERLKLNNPTFQQTNTIISNVMSASTTTLRYPGSMNNDMISLISSLIINPKCHFLITSYTPITIDKHISNVQKTTVLDVMKRLLHTKNIMVSAPVRRGMYISILNIIRGETDPTQVHKGLQRIRDRKLVNFIKWNPASIQVTLAKQSPHVVSQHKVCGLMMANHTSISTLFERCVTQFDRLYKRRAFLENYKKESMFSSADGQGNFEEMESSKEITQNLIDEYKSAERDDYFTNTYI.

142 to 148 (AGGTGSG) is a GTP binding site.

Belongs to the tubulin family.

The protein localises to the cytoplasm. The protein resides in the cytoskeleton. It localises to the microtubule organizing center. Its subcellular location is the centrosome. Tubulin is the major constituent of microtubules. The gamma chain is found at microtubule organizing centers (MTOC) such as the spindle poles or the centrosome, suggesting that it is involved in the minus-end nucleation of microtubule assembly. This is Tubulin gamma chain (G-TUB) from Plasmodium falciparum (isolate NF54).